The primary structure comprises 127 residues: Large ribosomal subunit protein bL17 (127 aa).

The protein belongs to the bacterial ribosomal protein bL17 family. As to quaternary structure, part of the 50S ribosomal subunit. Contacts protein L32.

In Leuconostoc mesenteroides subsp. mesenteroides (strain ATCC 8293 / DSM 20343 / BCRC 11652 / CCM 1803 / JCM 6124 / NCDO 523 / NBRC 100496 / NCIMB 8023 / NCTC 12954 / NRRL B-1118 / 37Y), this protein is Large ribosomal subunit protein bL17.